The primary structure comprises 260 residues: Ribosome maturation factor RimP (260 aa).

Residues 198–260 (QSLGILPPPP…RGDIDPIEGE (63 aa)) are disordered. 2 stretches are compositionally biased toward basic and acidic residues: residues 210–228 (AKTD…ENGK) and 238–254 (NTKE…RGDI).

This sequence belongs to the RimP family.

It localises to the cytoplasm. Functionally, required for maturation of 30S ribosomal subunits. This Nitrobacter winogradskyi (strain ATCC 25391 / DSM 10237 / CIP 104748 / NCIMB 11846 / Nb-255) protein is Ribosome maturation factor RimP.